The sequence spans 190 residues: Inosine triphosphate pyrophosphatase (190 aa).

10 to 15 (TGNAKK) contributes to the ITP binding site. Glu-40 serves as a coordination point for Mg(2+). Residues Lys-52, 68–69 (DT), Lys-85, 144–147 (FGWD), Lys-167, and 172–173 (HR) contribute to the ITP site.

Belongs to the HAM1 NTPase family. Homodimer. It depends on Mg(2+) as a cofactor. Mn(2+) serves as cofactor.

It is found in the cytoplasm. The enzyme catalyses ITP + H2O = IMP + diphosphate + H(+). It carries out the reaction dITP + H2O = dIMP + diphosphate + H(+). It catalyses the reaction XTP + H2O = XMP + diphosphate + H(+). Pyrophosphatase that hydrolyzes non-canonical purine nucleotides such as inosine triphosphate (ITP), deoxyinosine triphosphate (dITP) or xanthosine 5'-triphosphate (XTP) to their respective monophosphate derivatives. The enzyme does not distinguish between the deoxy- and ribose forms. Probably excludes non-canonical purines from RNA and DNA precursor pools, thus preventing their incorporation into RNA and DNA and avoiding chromosomal lesions. This chain is Inosine triphosphate pyrophosphatase, found in Culex quinquefasciatus (Southern house mosquito).